Consider the following 361-residue polypeptide: Probable U3 small nucleolar RNA-associated protein 11 (361 aa).

Disordered regions lie at residues 1–52 (MTKG…KKRK), 200–235 (LMSG…TPET), 262–295 (KRES…TRLL), and 311–361 (RHVR…RRAR). The span at 17 to 33 (HLKRKTHLERSQPKSRQ) shows a compositional bias: basic residues. 2 stretches are compositionally biased toward basic and acidic residues: residues 37 to 46 (QLEKHKDHVL) and 217 to 228 (RREVQEKMRRSG). Positions 278–287 (DDGEQEEAAA) are enriched in acidic residues. Residues 342-352 (RQMEQRRESRF) are compositionally biased toward basic and acidic residues.

The protein belongs to the UTP11 family. In terms of assembly, component of the ribosomal small subunit (SSU) processome.

It localises to the nucleus. It is found in the nucleolus. Functionally, involved in nucleolar processing of pre-18S ribosomal RNA. This is Probable U3 small nucleolar RNA-associated protein 11 from Leishmania major.